The primary structure comprises 342 residues: Holliday junction branch migration complex subunit RuvB (342 aa).

Residues 1–181 (MEERFLTPKD…FGMVLELEFY (181 aa)) are large ATPase domain (RuvB-L). Residues L20, R21, G62, K65, T66, T67, 128-130 (EDF), R171, Y181, and R218 each bind ATP. Residue T66 participates in Mg(2+) binding. The segment at 182–252 (TPDELKQIIK…TVEDAMKIMG (71 aa)) is small ATPAse domain (RuvB-S). The segment at 255–342 (AEGLDDMDRK…IGPLWDSTGD (88 aa)) is head domain (RuvB-H). Residues R310 and R315 each contribute to the DNA site.

Belongs to the RuvB family. In terms of assembly, homohexamer. Forms an RuvA(8)-RuvB(12)-Holliday junction (HJ) complex. HJ DNA is sandwiched between 2 RuvA tetramers; dsDNA enters through RuvA and exits via RuvB. An RuvB hexamer assembles on each DNA strand where it exits the tetramer. Each RuvB hexamer is contacted by two RuvA subunits (via domain III) on 2 adjacent RuvB subunits; this complex drives branch migration. In the full resolvosome a probable DNA-RuvA(4)-RuvB(12)-RuvC(2) complex forms which resolves the HJ.

It is found in the cytoplasm. The enzyme catalyses ATP + H2O = ADP + phosphate + H(+). Its function is as follows. The RuvA-RuvB-RuvC complex processes Holliday junction (HJ) DNA during genetic recombination and DNA repair, while the RuvA-RuvB complex plays an important role in the rescue of blocked DNA replication forks via replication fork reversal (RFR). RuvA specifically binds to HJ cruciform DNA, conferring on it an open structure. The RuvB hexamer acts as an ATP-dependent pump, pulling dsDNA into and through the RuvAB complex. RuvB forms 2 homohexamers on either side of HJ DNA bound by 1 or 2 RuvA tetramers; 4 subunits per hexamer contact DNA at a time. Coordinated motions by a converter formed by DNA-disengaged RuvB subunits stimulates ATP hydrolysis and nucleotide exchange. Immobilization of the converter enables RuvB to convert the ATP-contained energy into a lever motion, pulling 2 nucleotides of DNA out of the RuvA tetramer per ATP hydrolyzed, thus driving DNA branch migration. The RuvB motors rotate together with the DNA substrate, which together with the progressing nucleotide cycle form the mechanistic basis for DNA recombination by continuous HJ branch migration. Branch migration allows RuvC to scan DNA until it finds its consensus sequence, where it cleaves and resolves cruciform DNA. This chain is Holliday junction branch migration complex subunit RuvB, found in Kosmotoga olearia (strain ATCC BAA-1733 / DSM 21960 / TBF 19.5.1).